A 200-amino-acid polypeptide reads, in one-letter code: Glutathione S-transferase domain-containing protein DDB_G0273153/DDB_G0273923 (200 aa).

One can recognise a GST N-terminal domain in the interval 1 to 71 (MISSIYIFKI…YISNNHNFSG (71 aa)). The GST C-terminal domain occupies 73–195 (SLQESARVDD…INSNNINSQS (123 aa)).

This sequence belongs to the GST superfamily.

The sequence is that of Glutathione S-transferase domain-containing protein DDB_G0273153/DDB_G0273923 from Dictyostelium discoideum (Social amoeba).